Consider the following 33-residue polypeptide: ECRKMFGGCSVDSDCCAHLGCKPTLKYCAWDGT.

3 cysteine pairs are disulfide-bonded: C2–C16, C9–C21, and C15–C28.

Expressed by the venom gland.

Its subcellular location is the secreted. In terms of biological role, gating modifier of Kv2.1/KCNB1 channels. This chain is Kappa-theraphotoxin-Pg2a, found in Chilobrachys guangxiensis (Chinese earth tiger tarantula).